We begin with the raw amino-acid sequence, 101 residues long: Integration host factor subunit beta (101 aa).

The protein belongs to the bacterial histone-like protein family. Heterodimer of an alpha and a beta chain.

Its function is as follows. This protein is one of the two subunits of integration host factor, a specific DNA-binding protein that functions in genetic recombination as well as in transcriptional and translational control. This Maricaulis maris (strain MCS10) (Caulobacter maris) protein is Integration host factor subunit beta.